A 571-amino-acid polypeptide reads, in one-letter code: 2-succinyl-5-enolpyruvyl-6-hydroxy-3-cyclohexene-1-carboxylate synthase (571 aa).

Belongs to the TPP enzyme family. MenD subfamily. In terms of assembly, homodimer. It depends on Mg(2+) as a cofactor. Mn(2+) serves as cofactor. The cofactor is thiamine diphosphate.

It carries out the reaction isochorismate + 2-oxoglutarate + H(+) = 5-enolpyruvoyl-6-hydroxy-2-succinyl-cyclohex-3-ene-1-carboxylate + CO2. It functions in the pathway quinol/quinone metabolism; 1,4-dihydroxy-2-naphthoate biosynthesis; 1,4-dihydroxy-2-naphthoate from chorismate: step 2/7. It participates in quinol/quinone metabolism; menaquinone biosynthesis. Catalyzes the thiamine diphosphate-dependent decarboxylation of 2-oxoglutarate and the subsequent addition of the resulting succinic semialdehyde-thiamine pyrophosphate anion to isochorismate to yield 2-succinyl-5-enolpyruvyl-6-hydroxy-3-cyclohexene-1-carboxylate (SEPHCHC). The sequence is that of 2-succinyl-5-enolpyruvyl-6-hydroxy-3-cyclohexene-1-carboxylate synthase from Vibrio parahaemolyticus serotype O3:K6 (strain RIMD 2210633).